The primary structure comprises 209 residues: MAKMWDISQTLRPDLPVWPGDTAFACDEVWSIGPDCPVQVSRLTLSTHSGAHADAPSHYDQAGDDIASTPLELYVGPCRLVTASGNGPHVQPADLDWAAIDGATRVLVRTYAKFPADDWDPDFRALHADTIERLAATGCRLIGVDAASLDPQTSKTMDAHHAVQRHDMRILEGLVFDGVPDGHYELIALPLKIAGADAAPLRAVLRELP.

Residue Trp-18 participates in substrate binding. The Zn(2+) site is built by His-48, His-52, and Asp-54. His-58 serves as the catalytic Proton donor/acceptor. Zn(2+) contacts are provided by His-160 and Glu-172.

Belongs to the Cyclase 1 superfamily. KynB family. In terms of assembly, homodimer. It depends on Zn(2+) as a cofactor.

It catalyses the reaction N-formyl-L-kynurenine + H2O = L-kynurenine + formate + H(+). Its pathway is amino-acid degradation; L-tryptophan degradation via kynurenine pathway; L-kynurenine from L-tryptophan: step 2/2. Catalyzes the hydrolysis of N-formyl-L-kynurenine to L-kynurenine, the second step in the kynurenine pathway of tryptophan degradation. The chain is Kynurenine formamidase from Maricaulis maris (strain MCS10) (Caulobacter maris).